The following is a 180-amino-acid chain: Inner membrane-spanning protein YciB (180 aa).

5 consecutive transmembrane segments (helical) span residues 11-31 (ILFF…ALII), 52-72 (IIMG…NKVE), 76-96 (WKVT…QYGF), 121-141 (LAWA…SQYC), and 149-169 (FKSF…GIYV).

It belongs to the YciB family.

It is found in the cell inner membrane. Functionally, plays a role in cell envelope biogenesis, maintenance of cell envelope integrity and membrane homeostasis. The chain is Inner membrane-spanning protein YciB from Mannheimia succiniciproducens (strain KCTC 0769BP / MBEL55E).